Consider the following 176-residue polypeptide: Ribosome rescue factor SmrB (176 aa).

The tract at residues 29 to 51 (TIIQQPKKNTKQKEIKRSNREAS) is disordered. The span at 39 to 51 (KQKEIKRSNREAS) shows a compositional bias: basic and acidic residues. The Smr domain occupies 97-172 (LDMHGMTQQE…GDGALLVLLS (76 aa)).

The protein belongs to the SmrB family. In terms of assembly, associates with collided ribosomes, but not with correctly translating polysomes.

Acts as a ribosome collision sensor. Detects stalled/collided disomes (pairs of ribosomes where the leading ribosome is stalled and a second ribosome has collided with it) and endonucleolytically cleaves mRNA at the 5' boundary of the stalled ribosome. Stalled/collided disomes form a new interface (primarily via the 30S subunits) that binds SmrB. Cleaved mRNA becomes available for tmRNA ligation, leading to ribosomal subunit dissociation and rescue of stalled ribosomes. This chain is Ribosome rescue factor SmrB, found in Vibrio parahaemolyticus serotype O3:K6 (strain RIMD 2210633).